A 335-amino-acid chain; its full sequence is Nucleoid-associated protein SeAg_B2375 (335 aa).

The protein belongs to the YejK family.

The protein localises to the cytoplasm. It localises to the nucleoid. The sequence is that of Nucleoid-associated protein SeAg_B2375 from Salmonella agona (strain SL483).